Here is a 499-residue protein sequence, read N- to C-terminus: Trichothecene C-4 hydroxylase (499 aa).

The helical transmembrane segment at Val7–Asn29 threads the bilayer. Residues Asn173 and Asn287 are each glycosylated (N-linked (GlcNAc...) asparagine). Residue Cys442 coordinates heme. The N-linked (GlcNAc...) asparagine glycan is linked to Asn473.

It belongs to the cytochrome P450 family. Requires heme as cofactor.

The protein resides in the membrane. The protein operates within sesquiterpene biosynthesis; trichothecene biosynthesis. In terms of biological role, trichothecene C-4 hydroxylase; part of the gene cluster that mediates the production of the antimicrobial trichothecene harzianum A (HA) that plays a role in Botrytis cinerea antagonistic activity and plant defense priming. The biosynthesis of harzianum A begins with the cyclization of farnesyl diphosphate to trichodiene and is catalyzed by the trichodiene synthase TRI5. Trichodiene undergoes a series of oxygenations catalyzed by the cytochrome P450 monooxygenase TRI4. TRI4 controls the addition of 3 oxygens at C-2, C-11, and the C-12, C-13-epoxide to form the intermediate isotrichodiol. Isotrichodiol then undergoes a non-enzymatic isomerization and cyclization to form 12,13-epoxytrichothec-9-ene (EPT) which is further converted to trichodermol by the cytochrome P450 monooxygenase TRI11 via C-4 hydroxylation. The last step of HA synthesis is esterification of an octatriendioyl moiety to the C-4 oxygen of trichodermol. The octatriendioyl moiety is probably produced by the polyketide synthase TRI17 and the esterification performed by the trichothecene O-acetyltransferase TRI3. In Trichoderma arundinaceum, this protein is Trichothecene C-4 hydroxylase.